Reading from the N-terminus, the 278-residue chain is Alcohol dehydrogenase-related 31 kDa protein (278 aa).

Residue 11–34 (YVADCGGIALETSKVLMTKNIAKL) coordinates NAD(+). Ser139 is a binding site for substrate. The active-site Proton acceptor is the Tyr152.

It belongs to the short-chain dehydrogenases/reductases (SDR) family.

The protein is Alcohol dehydrogenase-related 31 kDa protein (Adhr) of Drosophila persimilis (Fruit fly).